A 329-amino-acid polypeptide reads, in one-letter code: Malate dehydrogenase (329 aa).

12–18 (GAAGQIG) contacts NAD(+). The substrate site is built by arginine 95 and arginine 101. NAD(+) is bound by residues asparagine 108, glutamine 115, and 132–134 (VGN). Asparagine 134 and arginine 165 together coordinate substrate. Catalysis depends on histidine 190, which acts as the Proton acceptor.

This sequence belongs to the LDH/MDH superfamily. MDH type 2 family.

The catalysed reaction is (S)-malate + NAD(+) = oxaloacetate + NADH + H(+). In terms of biological role, catalyzes the reversible oxidation of malate to oxaloacetate. This Bordetella petrii (strain ATCC BAA-461 / DSM 12804 / CCUG 43448) protein is Malate dehydrogenase.